Consider the following 186-residue polypeptide: GMP synthase [glutamine-hydrolyzing] subunit A (186 aa).

In terms of domain architecture, Glutamine amidotransferase type-1 spans 3 to 186; that stretch reads MILIINNHGQ…FENFYDVCRS (184 aa). Residue cysteine 77 is the Nucleophile of the active site. Residues histidine 164 and glutamate 166 contribute to the active site.

Heterodimer composed of a glutamine amidotransferase subunit (A) and a GMP-binding subunit (B).

It carries out the reaction XMP + L-glutamine + ATP + H2O = GMP + L-glutamate + AMP + diphosphate + 2 H(+). It functions in the pathway purine metabolism; GMP biosynthesis; GMP from XMP (L-Gln route): step 1/1. Catalyzes the synthesis of GMP from XMP. The protein is GMP synthase [glutamine-hydrolyzing] subunit A of Methanothermobacter thermautotrophicus (strain ATCC 29096 / DSM 1053 / JCM 10044 / NBRC 100330 / Delta H) (Methanobacterium thermoautotrophicum).